Consider the following 159-residue polypeptide: Single-stranded DNA-binding protein 2 (159 aa).

Residues 2 to 104 (MNRVVLVGRL…VVAESVQFLE (103 aa)) form the SSB domain. The segment at 106–159 (RNHAEGATSNNYQNEANYSNNNKTSSYRADTSQKSDSFANEGKPIDINPDDLPF) is disordered. Low complexity predominate over residues 114-127 (SNNYQNEANYSNNN). The span at 128 to 143 (KTSSYRADTSQKSDSF) shows a compositional bias: polar residues.

Homotetramer.

The chain is Single-stranded DNA-binding protein 2 (ssb2) from Listeria innocua serovar 6a (strain ATCC BAA-680 / CLIP 11262).